We begin with the raw amino-acid sequence, 116 residues long: Large ribosomal subunit protein bL19 (116 aa).

The protein belongs to the bacterial ribosomal protein bL19 family.

This protein is located at the 30S-50S ribosomal subunit interface and may play a role in the structure and function of the aminoacyl-tRNA binding site. The polypeptide is Large ribosomal subunit protein bL19 (Pseudothermotoga lettingae (strain ATCC BAA-301 / DSM 14385 / NBRC 107922 / TMO) (Thermotoga lettingae)).